The following is a 450-amino-acid chain: Signal recognition particle protein (450 aa).

Residues Gly107 to Thr114, Asp190 to Arg194, and Thr248 to Asp251 contribute to the GTP site.

The protein belongs to the GTP-binding SRP family. SRP54 subfamily. In terms of assembly, part of the signal recognition particle protein translocation system, which is composed of SRP and FtsY. SRP is a ribonucleoprotein composed of Ffh and a 4.5S RNA molecule.

It is found in the cytoplasm. The enzyme catalyses GTP + H2O = GDP + phosphate + H(+). In terms of biological role, involved in targeting and insertion of nascent membrane proteins into the cytoplasmic membrane. Binds to the hydrophobic signal sequence of the ribosome-nascent chain (RNC) as it emerges from the ribosomes. The SRP-RNC complex is then targeted to the cytoplasmic membrane where it interacts with the SRP receptor FtsY. Interaction with FtsY leads to the transfer of the RNC complex to the Sec translocase for insertion into the membrane, the hydrolysis of GTP by both Ffh and FtsY, and the dissociation of the SRP-FtsY complex into the individual components. This Buchnera aphidicola subsp. Baizongia pistaciae (strain Bp) protein is Signal recognition particle protein.